The primary structure comprises 377 residues: 3-dehydroquinate synthase (377 aa).

NAD(+) is bound by residues 113–117, 137–138, Lys150, and Lys159; these read GVIGD and TT. Positions 192, 254, and 273 each coordinate Zn(2+).

This sequence belongs to the sugar phosphate cyclases superfamily. Dehydroquinate synthase family. Co(2+) serves as cofactor. It depends on Zn(2+) as a cofactor. Requires NAD(+) as cofactor.

The protein resides in the cytoplasm. The enzyme catalyses 7-phospho-2-dehydro-3-deoxy-D-arabino-heptonate = 3-dehydroquinate + phosphate. The protein operates within metabolic intermediate biosynthesis; chorismate biosynthesis; chorismate from D-erythrose 4-phosphate and phosphoenolpyruvate: step 2/7. In terms of biological role, catalyzes the conversion of 3-deoxy-D-arabino-heptulosonate 7-phosphate (DAHP) to dehydroquinate (DHQ). This is 3-dehydroquinate synthase from Bartonella tribocorum (strain CIP 105476 / IBS 506).